The following is a 310-amino-acid chain: Olfactory receptor 8G3 (310 aa).

The Extracellular portion of the chain corresponds to Met1–Leu25. An N-linked (GlcNAc...) asparagine glycan is attached at Asn5. The chain crosses the membrane as a helical span at residues Arg26–Ile46. The Cytoplasmic segment spans residues Thr47–His54. Residues Leu55–Thr75 form a helical membrane-spanning segment. The Extracellular portion of the chain corresponds to Val76–Ala99. A disulfide bridge links Cys97 with Cys189. The helical transmembrane segment at Gln100–Tyr120 threads the bilayer. Over Asp121–His139 the chain is Cytoplasmic. Residues His140–Thr160 traverse the membrane as a helical segment. Residues Ser161 to Leu197 are Extracellular-facing. The chain crosses the membrane as a helical span at residues Leu198–Ser217. Residues Tyr218–Ala237 are Cytoplasmic-facing. A helical transmembrane segment spans residues Phe238–Met258. Topologically, residues Tyr259–Arg271 are extracellular. Residues Lys272–Leu292 form a helical membrane-spanning segment. Topologically, residues Arg293–Cys310 are cytoplasmic.

The protein belongs to the G-protein coupled receptor 1 family.

Its subcellular location is the cell membrane. Functionally, odorant receptor. The protein is Olfactory receptor 8G3 of Homo sapiens (Human).